The primary structure comprises 142 residues: Large ribosomal subunit protein bL17 (142 aa).

Belongs to the bacterial ribosomal protein bL17 family. As to quaternary structure, part of the 50S ribosomal subunit. Contacts protein L32.

The polypeptide is Large ribosomal subunit protein bL17 (Chlamydia felis (strain Fe/C-56) (Chlamydophila felis)).